The following is a 510-amino-acid chain: Indoleacetate--CoA ligase (510 aa).

It belongs to the ATP-dependent AMP-binding enzyme family. In terms of assembly, monomer.

The catalysed reaction is (indol-3-yl)acetate + ATP + CoA = (indol-3-yl)acetyl-CoA + AMP + diphosphate. It carries out the reaction (indol-3-yl)acetate + ATP + H(+) = (indol-3-yl)acetyl-AMP + diphosphate. The enzyme catalyses (indol-3-yl)acetyl-AMP + CoA = (indol-3-yl)acetyl-CoA + AMP + H(+). With respect to regulation, inhibited by high concentrations of substrates, and by the synthetic auxin compound 2,4-dichlorophenoxyacetate (2,4-D), which does not serve as substrate. Its function is as follows. Involved in degradation of indoleacetate, the most common member of the auxin class of plant hormones. Highly specific indoleacetate-CoA ligase which catalyzes the ATP-dependent activation of indoleacetate (IAA) to indoleacetyl-CoA. Also activates some closely related compounds such as the non-physiological compound (2-naphthyl)acetate and phenylacetate, which seems to be a fortuitous substrate for IaaB. The chain is Indoleacetate--CoA ligase from Aromatoleum aromaticum (strain DSM 19018 / LMG 30748 / EbN1) (Azoarcus sp. (strain EbN1)).